Reading from the N-terminus, the 2037-residue chain is Fatty acid synthase subunit beta (2037 aa).

The interval 1-453 (MSTHRPFQLT…VYDTFDGSDF (453 aa)) is acetyltransferase. S261 functions as the For acetyltransferase activity in the catalytic mechanism. Residues 465 to 798 (VKLITELPVH…GSRVMTSKES (334 aa)) form an enoyl reductase region. Residues 1132–1612 (GTELNWLQAF…LPNDTLQTTM (481 aa)) are dehydratase. A MaoC-like domain is found at 1506–1634 (NGKTIEESVI…KVETRNVETE (129 aa)). A malonyl/palmitoyl transferase region spans residues 1613-1833 (EHVGMINGRK…MTMQVAVPRD (221 aa)). The active-site For malonyltransferase activity is S1796.

It belongs to the fungal fatty acid synthetase subunit beta family. [Alpha(6)beta(6)] hexamers of two multifunctional subunits (alpha and beta).

It carries out the reaction acetyl-CoA + n malonyl-CoA + 2n NADPH + 4n H(+) = a long-chain-acyl-CoA + n CoA + n CO2 + 2n NADP(+).. The enzyme catalyses holo-[ACP] + acetyl-CoA = acetyl-[ACP] + CoA. It catalyses the reaction holo-[ACP] + malonyl-CoA = malonyl-[ACP] + CoA. The catalysed reaction is a (3R)-hydroxyacyl-[ACP] = a (2E)-enoyl-[ACP] + H2O. It carries out the reaction a 2,3-saturated acyl-[ACP] + NAD(+) = a (2E)-enoyl-[ACP] + NADH + H(+). The enzyme catalyses (9Z)-octadecenoyl-[ACP] + H2O = (9Z)-octadecenoate + holo-[ACP] + H(+). In terms of biological role, fatty acid synthetase catalyzes the formation of long-chain fatty acids from acetyl-CoA, malonyl-CoA and NADPH. The beta subunit contains domains for: [acyl-carrier-protein] acetyltransferase and malonyltransferase, S-acyl fatty acid synthase thioesterase, enoyl-[acyl-carrier-protein] reductase, and 3-hydroxypalmitoyl-[acyl-carrier-protein] dehydratase. In Candida albicans (Yeast), this protein is Fatty acid synthase subunit beta (FAS1).